The following is a 777-amino-acid chain: MGQKRQRDSKSSTFHAKKRKKAENATAPDSDDGWDGIVGADELNWKEVALPDHLEDAGGFFGLEEIEGVDIVRGSGNGEVKFKAVAGKPKKSILKKKAPEDENSEYDEEWSGFSDDDADRPENASSPAVEKPEKSDTKADKKSEKNADKKEAKDAKKKEAKAAKKEQKEKGSAIQHDTSINAGLSFAALQDTEEDDGADVSAWDSLGLSPEILTGLSKMKFASPTSVQEACIPQILEGHDVIGKASTGSGKTLAFGIPILEHYLEKKRDDISAEKEKKSEKDSTPIALILSPTRELAHQLSKHIGELIAQAPGVNARIALLTGGLSVQKQQRLLSGADIVIGTPGRVWEILSTGQGLIRKMQQIKFLVVDEADRLLSEGHFKEVEEILNALDRVEDGEVPGGENQASEEESDPSSERQTLVFSATFHRDLQQKLAGKGKWTGGDVMDKKESMDYLLQKLNFREEKPKFIDMNPISQMADNLKEGIVECGAMEKDLFLYTLLLYHPKHRTLVFTNSISAVRRLTKLLQTLQLPALALHSSMAQKARLRSVERFSSPSSDPSTILVATDVAARGLDIKGINLVIHYHAPRTADTYVHRSGRTARAGASGKSVIICGPDEMVGVVRLAAKVHANMANGKKLPLESLELDRRVVSRVKPRVSLASRITDANIAKEKISAEDNWLRNAAEDLGVEYDSEEFDESNGKGRGRGRGRHQKQKEVGSVSKAELAGLRAELKQLLSQRVNVGVSERYLTAGRVDIDALLRGEGNASFLGPVDPLHF.

The span at 1–10 (MGQKRQRDSK) shows a compositional bias: basic and acidic residues. Disordered stretches follow at residues 1–36 (MGQK…GWDG) and 86–177 (AGKP…IQHD). Positions 101–119 (DENSEYDEEWSGFSDDDAD) are enriched in acidic residues. Residues 130–171 (EKPEKSDTKADKKSEKNADKKEAKDAKKKEAKAAKKEQKEKG) show a composition bias toward basic and acidic residues. The Q motif signature appears at 201-229 (SAWDSLGLSPEILTGLSKMKFASPTSVQE). A Helicase ATP-binding domain is found at 232 to 444 (IPQILEGHDV…AGKGKWTGGD (213 aa)). 245-252 (ASTGSGKT) serves as a coordination point for ATP. Positions 370–373 (DEAD) match the DEAD box motif. Residues 393–417 (RVEDGEVPGGENQASEEESDPSSER) are disordered. The 151-residue stretch at 496-646 (FLYTLLLYHP…KLPLESLELD (151 aa)) folds into the Helicase C-terminal domain. The interval 692–720 (DSEEFDESNGKGRGRGRGRHQKQKEVGSV) is disordered. The span at 703–713 (GRGRGRGRHQK) shows a compositional bias: basic residues.

It belongs to the DEAD box helicase family. DDX24/MAK5 subfamily.

The protein resides in the nucleus. Its subcellular location is the nucleolus. The enzyme catalyses ATP + H2O = ADP + phosphate + H(+). Functionally, ATP-binding RNA helicase involved in the biogenesis of 60S ribosomal subunits and is required for the normal formation of 25S and 5.8S rRNAs. The polypeptide is ATP-dependent RNA helicase mak5 (mak5) (Neosartorya fischeri (strain ATCC 1020 / DSM 3700 / CBS 544.65 / FGSC A1164 / JCM 1740 / NRRL 181 / WB 181) (Aspergillus fischerianus)).